A 336-amino-acid polypeptide reads, in one-letter code: Acyl-CoA-binding domain-containing protein 4 (336 aa).

The helical; Signal-anchor transmembrane segment at 12–32 (AVIGLLFAFLVAKLISTVIAF) threads the bilayer. The interval 40 to 88 (TRSTPTSPSAADTPAAPAPPPASLDGGHGDTSDGSGSDSDSDWEGVEST) is disordered. Residues 42–54 (STPTSPSAADTPA) are compositionally biased toward low complexity. A compositionally biased stretch (acidic residues) spans 78–88 (SDSDWEGVEST). Residues 90-178 (LDEEFSAASA…VDELFPNWSM (89 aa)) enclose the ACB domain. Residues 120 to 124 (YGLYK), lysine 142, lysine 146, and tyrosine 165 each bind an acyl-CoA. Asparagine 175 carries an N-linked (GlcNAc...) asparagine glycan. Residues 179–202 (GSSTKRKDEDTTVSASSSKGPMGP) form a disordered region. Asparagine 216 carries N-linked (GlcNAc...) asparagine glycosylation. ANK repeat units follow at residues 251 to 280 (EGRT…DVNA) and 284 to 313 (EGQT…DVQI).

Belongs to the ACBP family. In terms of tissue distribution, highly expressed in leaves. Expressed at low levels in roots and seeds.

It localises to the endoplasmic reticulum membrane. Functionally, binds medium- and long-chain acyl-CoA esters with high affinity. Can interact in vitro with palmitoyl-CoA, linoleoyl-CoA and linolenoyl-CoA. Binds phosphatidic acid (PA) and phosphatidylcholine (PC) in vitro. May play a role in the biosynthesis of phospholipids. This chain is Acyl-CoA-binding domain-containing protein 4, found in Oryza sativa subsp. japonica (Rice).